The following is a 430-amino-acid chain: Tyrosine--tRNA ligase (430 aa).

Tyr32 is an L-tyrosine binding site. The 'HIGH' region signature appears at 37-46 (PTADSLHIGH). L-tyrosine-binding residues include Tyr172 and Gln176. The 'KMSKS' region signature appears at 232-236 (KFGKT). Residue Lys235 participates in ATP binding. An S4 RNA-binding domain is found at 362 to 429 (VKAVDLFVDN…GKKNYFLLIA (68 aa)).

The protein belongs to the class-I aminoacyl-tRNA synthetase family. TyrS type 1 subfamily. In terms of assembly, homodimer.

It localises to the cytoplasm. It carries out the reaction tRNA(Tyr) + L-tyrosine + ATP = L-tyrosyl-tRNA(Tyr) + AMP + diphosphate + H(+). Catalyzes the attachment of tyrosine to tRNA(Tyr) in a two-step reaction: tyrosine is first activated by ATP to form Tyr-AMP and then transferred to the acceptor end of tRNA(Tyr). This chain is Tyrosine--tRNA ligase, found in Bacteroides thetaiotaomicron (strain ATCC 29148 / DSM 2079 / JCM 5827 / CCUG 10774 / NCTC 10582 / VPI-5482 / E50).